A 465-amino-acid chain; its full sequence is UDP-N-acetylmuramate--L-alanine ligase (465 aa).

114 to 120 contributes to the ATP binding site; that stretch reads GAHGKTT.

This sequence belongs to the MurCDEF family.

It localises to the cytoplasm. It catalyses the reaction UDP-N-acetyl-alpha-D-muramate + L-alanine + ATP = UDP-N-acetyl-alpha-D-muramoyl-L-alanine + ADP + phosphate + H(+). The protein operates within cell wall biogenesis; peptidoglycan biosynthesis. Its function is as follows. Cell wall formation. This Syntrophomonas wolfei subsp. wolfei (strain DSM 2245B / Goettingen) protein is UDP-N-acetylmuramate--L-alanine ligase.